A 149-amino-acid chain; its full sequence is D-aminoacyl-tRNA deacylase (149 aa).

Residues 137–138 (GP) carry the Gly-cisPro motif, important for rejection of L-amino acids motif.

Belongs to the DTD family. Homodimer.

The protein localises to the cytoplasm. It catalyses the reaction glycyl-tRNA(Ala) + H2O = tRNA(Ala) + glycine + H(+). The enzyme catalyses a D-aminoacyl-tRNA + H2O = a tRNA + a D-alpha-amino acid + H(+). An aminoacyl-tRNA editing enzyme that deacylates mischarged D-aminoacyl-tRNAs. Also deacylates mischarged glycyl-tRNA(Ala), protecting cells against glycine mischarging by AlaRS. Acts via tRNA-based rather than protein-based catalysis; rejects L-amino acids rather than detecting D-amino acids in the active site. By recycling D-aminoacyl-tRNA to D-amino acids and free tRNA molecules, this enzyme counteracts the toxicity associated with the formation of D-aminoacyl-tRNA entities in vivo and helps enforce protein L-homochirality. The sequence is that of D-aminoacyl-tRNA deacylase from Leuconostoc mesenteroides subsp. mesenteroides (strain ATCC 8293 / DSM 20343 / BCRC 11652 / CCM 1803 / JCM 6124 / NCDO 523 / NBRC 100496 / NCIMB 8023 / NCTC 12954 / NRRL B-1118 / 37Y).